We begin with the raw amino-acid sequence, 655 residues long: FYVE, RhoGEF and PH domain-containing protein 2 (655 aa).

Residues Ser11 and Ser48 each carry the phosphoserine modification. Positions 18–64 (VFENSRTPEAAPRGQRLEDVHHRPECRPPESPGPREKTNVGEAVGSE) are disordered. The span at 32 to 56 (QRLEDVHHRPECRPPESPGPREKTN) shows a compositional bias: basic and acidic residues. One can recognise a DH domain in the interval 102-290 (PEKKIVQELL…FSAAQHSNAA (189 aa)). Positions 319 to 418 (TLLREGPVLK…WMQAFQAAID (100 aa)) constitute a PH 1 domain. Residues 458–518 (DKMVTMCMRC…VCLHCYAFLT (61 aa)) form an FYVE-type zinc finger. Residues Cys464, Cys467, Cys481, Cys484, Cys489, Cys492, Cys510, and Cys513 each contribute to the Zn(2+) site. Residues 544–641 (QSLMCSFLQL…WVKAMERAAS (98 aa)) form the PH 2 domain. Ser654 is subject to Phosphoserine.

It localises to the cytoplasm. The protein resides in the cytoskeleton. It is found in the nucleus. The protein localises to the early endosome. Its subcellular location is the early endosome membrane. It localises to the cell projection. The protein resides in the ruffle membrane. Its function is as follows. Activates CDC42, a member of the Ras-like family of Rho- and Rac proteins, by exchanging bound GDP for free GTP. Activates JNK1 via CDC42 but not RAC1. Binds to phosphatidylinositol 4,5-bisphosphate, phosphatidylinositol 3,4,5-trisphosphate, phosphatidylinositol 5-monophosphate, phosphatidylinositol 4-monophosphate and phosphatidylinositol 3-monophosphate. The chain is FYVE, RhoGEF and PH domain-containing protein 2 (FGD2) from Homo sapiens (Human).